The sequence spans 529 residues: Type I restriction enzyme EcoKI methylase subunit (529 aa).

S-adenosyl-L-methionine-binding positions include 148-153, 178-180, and Glu-216; these read QYFTPR and TAG.

The protein belongs to the N(4)/N(6)-methyltransferase family. In terms of assembly, the type I restriction/modification system is composed of three polypeptides R, M and S. The restriction enzyme has stoichiometry R(2)M(2)S(1). The methyltransferase is composed of M(2)S(1). As to quaternary structure, (Microbial infection) Interacts with Escherichia phage T7 protein Ocr; this interaction leads to the inhibition of the methyltransferase restriction enzyme M.EcoKI composed of M(2)S(1).

The enzyme catalyses a 2'-deoxyadenosine in DNA + S-adenosyl-L-methionine = an N(6)-methyl-2'-deoxyadenosine in DNA + S-adenosyl-L-homocysteine + H(+). Its function is as follows. The subtype gamma methyltransferase (M) subunit of a type I restriction enzyme. The M and S subunits together form a methyltransferase (MTase) that methylates A-2 on the top and A-3 on the bottom strand of the sequence 5'-AACN(6)GTGC-3'. In the presence of the R subunit the complex can also act as an endonuclease, binding to the same target sequence but cutting the DNA some distance from this site. Whether the DNA is cut or modified depends on the methylation state of the target sequence. When the target site is unmodified, the DNA is cut. When the target site is hemimethylated, the complex acts as a maintenance MTase modifying the DNA so that both strands become methylated. After locating a non-methylated recognition site, the enzyme complex serves as a molecular motor that translocates DNA in an ATP-dependent manner until a collision occurs that triggers cleavage. This is Type I restriction enzyme EcoKI methylase subunit from Escherichia coli (strain K12).